A 182-amino-acid polypeptide reads, in one-letter code: MSKQLTAQAPVEPIVLGKMGSSYGIRGWLRVFSSTEDAESIFDYQPWFIQKAGQWQQVQLESWKHHNQDLIIKLKGVDDRDSANLLTNCEIVVDSSQLPALEDGSYYWKDLMGCQVVTTEGYDLGKVVDMMETGSNDVIVIKANLKDAFGIKERLVPFLDGQVIKKVDLATRTIEVDWDPGF.

The 80-residue stretch at 103 to 182 (DGSYYWKDLM…TIEVDWDPGF (80 aa)) folds into the PRC barrel domain.

This sequence belongs to the RimM family. As to quaternary structure, binds ribosomal protein uS19.

It localises to the cytoplasm. Functionally, an accessory protein needed during the final step in the assembly of 30S ribosomal subunit, possibly for assembly of the head region. Essential for efficient processing of 16S rRNA. May be needed both before and after RbfA during the maturation of 16S rRNA. It has affinity for free ribosomal 30S subunits but not for 70S ribosomes. The chain is Ribosome maturation factor RimM from Citrobacter koseri (strain ATCC BAA-895 / CDC 4225-83 / SGSC4696).